The chain runs to 68 residues: Large ribosomal subunit protein uL29 (68 aa).

The protein belongs to the universal ribosomal protein uL29 family.

The polypeptide is Large ribosomal subunit protein uL29 (Maricaulis maris (strain MCS10) (Caulobacter maris)).